A 200-amino-acid chain; its full sequence is Recombination protein RecR (200 aa).

The C4-type zinc finger occupies 57 to 72 (CRQCRTLTEQELCPQC). The region spanning 80–175 (TQLCVVEGPM…VASRIAHGVP (96 aa)) is the Toprim domain.

The protein belongs to the RecR family.

In terms of biological role, may play a role in DNA repair. It seems to be involved in an RecBC-independent recombinational process of DNA repair. It may act with RecF and RecO. The chain is Recombination protein RecR from Pseudomonas putida (strain W619).